The following is a 96-amino-acid chain: UPF0235 protein NT01EI_0281 (96 aa).

The protein belongs to the UPF0235 family.

The protein is UPF0235 protein NT01EI_0281 of Edwardsiella ictaluri (strain 93-146).